Here is a 637-residue protein sequence, read N- to C-terminus: DNA mismatch repair protein MutL (637 aa).

The span at 343-352 (QQSPDRQVSP) shows a compositional bias: polar residues. Positions 343-411 (QQSPDRQVSP…SARNGDVSLP (69 aa)) are disordered. The segment covering 365 to 380 (SIERKPSVSYDVRDSH) has biased composition (basic and acidic residues). Residues 388–397 (YSSGSSSYRS) are compositionally biased toward low complexity.

It belongs to the DNA mismatch repair MutL/HexB family.

Its function is as follows. This protein is involved in the repair of mismatches in DNA. It is required for dam-dependent methyl-directed DNA mismatch repair. May act as a 'molecular matchmaker', a protein that promotes the formation of a stable complex between two or more DNA-binding proteins in an ATP-dependent manner without itself being part of a final effector complex. This is DNA mismatch repair protein MutL from Shewanella halifaxensis (strain HAW-EB4).